We begin with the raw amino-acid sequence, 481 residues long: Argininosuccinate lyase (481 aa).

The span at 1 to 17 (MKNAPVDTQSDAATSFE) shows a compositional bias: polar residues. Positions 1-25 (MKNAPVDTQSDAATSFEGTAANPQW) are disordered.

The protein belongs to the lyase 1 family. Argininosuccinate lyase subfamily.

It is found in the cytoplasm. It catalyses the reaction 2-(N(omega)-L-arginino)succinate = fumarate + L-arginine. It functions in the pathway amino-acid biosynthesis; L-arginine biosynthesis; L-arginine from L-ornithine and carbamoyl phosphate: step 3/3. In Gluconobacter oxydans (strain 621H) (Gluconobacter suboxydans), this protein is Argininosuccinate lyase.